The sequence spans 318 residues: NADH-ubiquinone oxidoreductase chain 1 (318 aa).

Transmembrane regions (helical) follow at residues 2–22 (FLMN…FLTL), 37–57 (PNIV…KLFI), 69–89 (LMFT…WIPM), 100–120 (LGVL…LWSG), 136–156 (VAQT…TMMM), 171–191 (HMWL…STLA), 206–226 (ELVS…FFMA), 253–273 (ELFT…FLWI), and 294–314 (LPLT…SAGI).

The protein belongs to the complex I subunit 1 family.

It is found in the mitochondrion inner membrane. The enzyme catalyses a ubiquinone + NADH + 5 H(+)(in) = a ubiquinol + NAD(+) + 4 H(+)(out). Functionally, core subunit of the mitochondrial membrane respiratory chain NADH dehydrogenase (Complex I) that is believed to belong to the minimal assembly required for catalysis. Complex I functions in the transfer of electrons from NADH to the respiratory chain. The immediate electron acceptor for the enzyme is believed to be ubiquinone. The protein is NADH-ubiquinone oxidoreductase chain 1 (MT-ND1) of Tolypeutes matacus (Southern three-banded armadillo).